The chain runs to 426 residues: Glutamyl-tRNA reductase (426 aa).

Residues 49–52 (TCNR), Ser-109, 114–116 (EGQ), and Gln-120 contribute to the substrate site. Catalysis depends on Cys-50, which acts as the Nucleophile. 189-194 (GAGETG) serves as a coordination point for NADP(+).

This sequence belongs to the glutamyl-tRNA reductase family. As to quaternary structure, homodimer.

It catalyses the reaction (S)-4-amino-5-oxopentanoate + tRNA(Glu) + NADP(+) = L-glutamyl-tRNA(Glu) + NADPH + H(+). It participates in porphyrin-containing compound metabolism; protoporphyrin-IX biosynthesis; 5-aminolevulinate from L-glutamyl-tRNA(Glu): step 1/2. Its function is as follows. Catalyzes the NADPH-dependent reduction of glutamyl-tRNA(Glu) to glutamate 1-semialdehyde (GSA). This chain is Glutamyl-tRNA reductase (hemA), found in Chlorobaculum parvum (strain DSM 263 / NCIMB 8327) (Chlorobium vibrioforme subsp. thiosulfatophilum).